A 232-amino-acid polypeptide reads, in one-letter code: Protein FAM246A (232 aa).

3 disordered regions span residues 1–47, 153–178, and 191–232; these read MATP…RAPG, LPPP…RGPT, and AASR…GGGD. The span at 19 to 31 shows a compositional bias: basic and acidic residues; that stretch reads EVLRRVTGRRRDP. Residues 211–220 show a composition bias toward basic residues; that stretch reads APVRKNHKKM.

This sequence belongs to the FAM246 family.

The chain is Protein FAM246A from Homo sapiens (Human).